The chain runs to 353 residues: MDNVAQLETDTNFQSRKKITWGVFSVLLLFLVAGILYYFFVYRFYQSTDNAYVQADVTWVMPKISGEVMELLINDNQVVKKGETLAVLDHRDYQARYDQARSVVSLKEAALGVQQQNEKSARSSIIEANSGVVAAQADLARLKKEFERYQDLLKDGVITRQNFEGIQSQYLTAQAQLSKAQAAVNAAEAQLGSLQASRAQLLADIQSSHANLNLYQVDLASSKVVSPVSGKIGSLAIQKGSRVSPQTRLMAIIPENSLYVQANFKETQIEKMHIGQKVKLKLDAYPSLNFTGKIESFSPASGATFSLMPPDNATGNFNKVVQRIPVRIAIDSSPHIDLVKPGMSVSATVDLRT.

Residues 21–41 (WGVFSVLLLFLVAGILYYFFV) traverse the membrane as a helical segment. The stretch at 132 to 204 (VVAAQADLAR…QASRAQLLAD (73 aa)) forms a coiled coil.

Belongs to the membrane fusion protein (MFP) (TC 8.A.1) family.

Its subcellular location is the cell inner membrane. In terms of biological role, probably part of an efflux pump system that contributes to adaptation to osmotic stress and resistance to colistin. The chain is Colistin resistance protein EmrA from Acinetobacter baumannii (strain ATCC 17978 / DSM 105126 / CIP 53.77 / LMG 1025 / NCDC KC755 / 5377).